The primary structure comprises 193 residues: MDSLVLASSSEYRLRLLKQLMIVPGEVISPDLDESVHKGELPRLYAERVAREKALKVFSSRPDKFVLGADTVAYCGRRIMLKTDDEAQATEYLEMISGRRHRVCTAVCLCAPTGDVRVRSVVSVVKFKRLSKDEIDCYIRSGEWKGKAGGYSIQGWASALISWMQGSHSSIVGLPLHETYCLLSGYFKLTHIP.

Asp70 serves as the catalytic Proton acceptor.

It belongs to the Maf family. A divalent metal cation is required as a cofactor.

Its subcellular location is the cytoplasm. It carries out the reaction a ribonucleoside 5'-triphosphate + H2O = a ribonucleoside 5'-phosphate + diphosphate + H(+). It catalyses the reaction a 2'-deoxyribonucleoside 5'-triphosphate + H2O = a 2'-deoxyribonucleoside 5'-phosphate + diphosphate + H(+). Its function is as follows. Nucleoside triphosphate pyrophosphatase. May have a dual role in cell division arrest and in preventing the incorporation of modified nucleotides into cellular nucleic acids. The chain is Nucleoside triphosphate pyrophosphatase from Anaplasma phagocytophilum (strain HZ).